The primary structure comprises 513 residues: Lysine--tRNA ligase (513 aa).

Mg(2+) contacts are provided by E422 and E429.

Belongs to the class-II aminoacyl-tRNA synthetase family. In terms of assembly, homodimer. Mg(2+) serves as cofactor.

It localises to the cytoplasm. The enzyme catalyses tRNA(Lys) + L-lysine + ATP = L-lysyl-tRNA(Lys) + AMP + diphosphate. This chain is Lysine--tRNA ligase, found in Tolumonas auensis (strain DSM 9187 / NBRC 110442 / TA 4).